Consider the following 151-residue polypeptide: Regulatory protein RecX (151 aa).

This sequence belongs to the RecX family.

The protein localises to the cytoplasm. Functionally, modulates RecA activity. The chain is Regulatory protein RecX from Chlorobium phaeobacteroides (strain BS1).